The primary structure comprises 218 residues: Ribose-5-phosphate isomerase A (218 aa).

Substrate contacts are provided by residues 28–31, 81–84, and 94–97; these read TGST, DGAD, and KGGG. Glutamate 103 serves as the catalytic Proton acceptor. Position 121 (lysine 121) interacts with substrate.

Belongs to the ribose 5-phosphate isomerase family. Homodimer.

The enzyme catalyses aldehydo-D-ribose 5-phosphate = D-ribulose 5-phosphate. Its pathway is carbohydrate degradation; pentose phosphate pathway; D-ribose 5-phosphate from D-ribulose 5-phosphate (non-oxidative stage): step 1/1. Its function is as follows. Catalyzes the reversible conversion of ribose-5-phosphate to ribulose 5-phosphate. This is Ribose-5-phosphate isomerase A from Vibrio vulnificus (strain CMCP6).